The primary structure comprises 89 residues: Small ribosomal subunit protein uS15 (89 aa).

Belongs to the universal ribosomal protein uS15 family. In terms of assembly, part of the 30S ribosomal subunit. Forms a bridge to the 50S subunit in the 70S ribosome, contacting the 23S rRNA.

Functionally, one of the primary rRNA binding proteins, it binds directly to 16S rRNA where it helps nucleate assembly of the platform of the 30S subunit by binding and bridging several RNA helices of the 16S rRNA. In terms of biological role, forms an intersubunit bridge (bridge B4) with the 23S rRNA of the 50S subunit in the ribosome. This is Small ribosomal subunit protein uS15 from Staphylococcus aureus (strain JH1).